The primary structure comprises 1420 residues: DNA-directed RNA polymerase subunit beta' (1420 aa).

Zn(2+) is bound by residues cysteine 72, cysteine 74, cysteine 87, and cysteine 90. Residues aspartate 462, aspartate 464, and aspartate 466 each coordinate Mg(2+). 4 residues coordinate Zn(2+): cysteine 816, cysteine 896, cysteine 903, and cysteine 906.

Belongs to the RNA polymerase beta' chain family. The RNAP catalytic core consists of 2 alpha, 1 beta, 1 beta' and 1 omega subunit. When a sigma factor is associated with the core the holoenzyme is formed, which can initiate transcription. The cofactor is Mg(2+). Requires Zn(2+) as cofactor.

The enzyme catalyses RNA(n) + a ribonucleoside 5'-triphosphate = RNA(n+1) + diphosphate. Functionally, DNA-dependent RNA polymerase catalyzes the transcription of DNA into RNA using the four ribonucleoside triphosphates as substrates. This Blochmanniella floridana protein is DNA-directed RNA polymerase subunit beta'.